The sequence spans 300 residues: Protease HtpX homolog (300 aa).

The next 2 membrane-spanning stretches (helical) occupy residues 5 to 25 (IFLL…FISL) and 41 to 61 (TLFL…LAIS). H146 lines the Zn(2+) pocket. Residue E147 is part of the active site. Residue H150 participates in Zn(2+) binding. The next 2 membrane-spanning stretches (helical) occupy residues 161-181 (LLQG…GFFV) and 196-216 (IGFY…ASII). Position 225 (E225) interacts with Zn(2+).

Belongs to the peptidase M48B family. The cofactor is Zn(2+).

It is found in the cell inner membrane. The sequence is that of Protease HtpX homolog from Methylacidiphilum infernorum (isolate V4) (Methylokorus infernorum (strain V4)).